Here is a 342-residue protein sequence, read N- to C-terminus: NADH-quinone oxidoreductase subunit H 1 (342 aa).

Transmembrane regions (helical) follow at residues 7-27, 78-98, 120-140, 166-186, 193-213, 245-265, 284-304, and 322-342; these read FLLE…VIAM, ALFI…GAVI, IGVL…MIGG, MGLS…GEIV, WWNI…SFAE, LFAE…FYFG, ILGT…FMWV, and KIMI…ILLF.

Belongs to the complex I subunit 1 family. As to quaternary structure, NDH-1 is composed of 14 different subunits. Subunits NuoA, H, J, K, L, M, N constitute the membrane sector of the complex.

The protein localises to the cell inner membrane. It carries out the reaction a quinone + NADH + 5 H(+)(in) = a quinol + NAD(+) + 4 H(+)(out). NDH-1 shuttles electrons from NADH, via FMN and iron-sulfur (Fe-S) centers, to quinones in the respiratory chain. The immediate electron acceptor for the enzyme in this species is believed to be ubiquinone. Couples the redox reaction to proton translocation (for every two electrons transferred, four hydrogen ions are translocated across the cytoplasmic membrane), and thus conserves the redox energy in a proton gradient. This subunit may bind ubiquinone. The sequence is that of NADH-quinone oxidoreductase subunit H 1 from Cytophaga hutchinsonii (strain ATCC 33406 / DSM 1761 / CIP 103989 / NBRC 15051 / NCIMB 9469 / D465).